A 1240-amino-acid chain; its full sequence is DNA polymerase II large subunit (1240 aa).

Belongs to the archaeal DNA polymerase II family. In terms of assembly, heterodimer of a large subunit and a small subunit.

The enzyme catalyses DNA(n) + a 2'-deoxyribonucleoside 5'-triphosphate = DNA(n+1) + diphosphate. It carries out the reaction Exonucleolytic cleavage in the 3'- to 5'-direction to yield nucleoside 5'-phosphates.. Functionally, possesses two activities: a DNA synthesis (polymerase) and an exonucleolytic activity that degrades single-stranded DNA in the 3'- to 5'-direction. Has a template-primer preference which is characteristic of a replicative DNA polymerase. The polypeptide is DNA polymerase II large subunit (Methanopyrus kandleri (strain AV19 / DSM 6324 / JCM 9639 / NBRC 100938)).